Here is a 593-residue protein sequence, read N- to C-terminus: Probable E3 ubiquitin-protein ligase ARI2 (593 aa).

Positions 120 to 334 (SMMSCDICVE…ISGHSCGRFQ (215 aa)) are TRIAD supradomain. Zn(2+) is bound by residues C124, C127, C141, H143, C146, C149, C168, C173, C215, C221, C237, C239, C244, C247, H252, C257, C284, and C287. An RING-type 1 zinc finger spans residues 124–173 (CDICVEDVPGYQLTRMDCGHSFCNNCWTGHFTVKINEGQSKRIICMAHKC). An IBR-type zinc finger spans residues 195–257 (EKFDRFLLES…SSQAHSPCSC (63 aa)). The segment at 284–312 (CPKCHKPVEKNGGCNLVTCLCRQSFCWLC) adopts an RING-type 2; atypical zinc-finger fold. C297 is an active-site residue. The Zn(2+) site is built by C302, C304, C309, C312, H320, and C330.

This sequence belongs to the RBR family. Ariadne subfamily. Requires Zn(2+) as cofactor. In terms of tissue distribution, ubiquitous.

The enzyme catalyses [E2 ubiquitin-conjugating enzyme]-S-ubiquitinyl-L-cysteine + [acceptor protein]-L-lysine = [E2 ubiquitin-conjugating enzyme]-L-cysteine + [acceptor protein]-N(6)-ubiquitinyl-L-lysine.. Its pathway is protein modification; protein ubiquitination. In terms of biological role, might act as an E3 ubiquitin-protein ligase, or as part of E3 complex, which accepts ubiquitin from specific E2 ubiquitin-conjugating enzymes and then transfers it to substrates. This chain is Probable E3 ubiquitin-protein ligase ARI2 (ARI2), found in Arabidopsis thaliana (Mouse-ear cress).